A 125-amino-acid chain; its full sequence is RutC family protein aq_364 (125 aa).

It belongs to the RutC family.

The polypeptide is RutC family protein aq_364 (Aquifex aeolicus (strain VF5)).